Reading from the N-terminus, the 336-residue chain is Aspartate--ammonia ligase (336 aa).

Belongs to the class-II aminoacyl-tRNA synthetase family. AsnA subfamily.

Its subcellular location is the cytoplasm. The catalysed reaction is L-aspartate + NH4(+) + ATP = L-asparagine + AMP + diphosphate + H(+). It functions in the pathway amino-acid biosynthesis; L-asparagine biosynthesis; L-asparagine from L-aspartate (ammonia route): step 1/1. The protein is Aspartate--ammonia ligase of Lactobacillus johnsonii (strain CNCM I-12250 / La1 / NCC 533).